The following is a 205-amino-acid chain: ATP-dependent Clp protease proteolytic subunit (205 aa).

The Nucleophile role is filled by Ser-98. The active site involves His-123.

It belongs to the peptidase S14 family. In terms of assembly, fourteen ClpP subunits assemble into 2 heptameric rings which stack back to back to give a disk-like structure with a central cavity, resembling the structure of eukaryotic proteasomes.

The protein localises to the cytoplasm. It carries out the reaction Hydrolysis of proteins to small peptides in the presence of ATP and magnesium. alpha-casein is the usual test substrate. In the absence of ATP, only oligopeptides shorter than five residues are hydrolyzed (such as succinyl-Leu-Tyr-|-NHMec, and Leu-Tyr-Leu-|-Tyr-Trp, in which cleavage of the -Tyr-|-Leu- and -Tyr-|-Trp bonds also occurs).. Its function is as follows. Cleaves peptides in various proteins in a process that requires ATP hydrolysis. Has a chymotrypsin-like activity. Plays a major role in the degradation of misfolded proteins. The polypeptide is ATP-dependent Clp protease proteolytic subunit (Desulfosudis oleivorans (strain DSM 6200 / JCM 39069 / Hxd3) (Desulfococcus oleovorans)).